The primary structure comprises 306 residues: Oligopeptide transport system permease protein OppB (306 aa).

Over 1-12 the chain is Cytoplasmic; the sequence is MLKFILRRCLEA. The chain crosses the membrane as a helical span at residues 13–30; it reads IPTLFILITISFFMMRLA. Over 31-101 the chain is Periplasmic; the sequence is PGSPFTGERA…ASFPVSAKLG (71 aa). The region spanning 94 to 293 is the ABC transmembrane type-1 domain; that stretch reads FPVSAKLGAA…ALTILFNAIV (200 aa). A helical membrane pass occupies residues 102–121; that stretch reads AAAFLLAVIIGVSAGVIAAL. Residues 122–133 are Cytoplasmic-facing; sequence KQNTRWDYTVMG. The helical transmembrane segment at 134 to 156 threads the bilayer; sequence FAMTGVVIPSFVVAPLLVMVFAI. The Periplasmic segment spans residues 157–165; the sequence is TLQWLPGGG. The chain crosses the membrane as a helical span at residues 166-188; the sequence is WNGGALKFMILPMVALSLAYIAS. Topologically, residues 189 to 227 are cytoplasmic; it reads IARITRGSMIEVLHSNFIRTARAKGLPMRRIIFRHALKP. A helical membrane pass occupies residues 228 to 250; sequence ALLPVLSYMGPAFVGIITGSMVI. Over 251-277 the chain is Periplasmic; sequence ETIYGLPGIGQLFVNGALNRDYSLVLS. Residues 278-300 form a helical membrane-spanning segment; it reads LTILVGALTILFNAIVDVLYAVI. Topologically, residues 301–306 are cytoplasmic; the sequence is DPKIRY.

It belongs to the binding-protein-dependent transport system permease family. OppBC subfamily. As to quaternary structure, the complex is composed of two ATP-binding proteins (OppD and OppF), two transmembrane proteins (OppB and OppC) and a solute-binding protein (OppA).

The protein localises to the cell inner membrane. Its function is as follows. Part of the ABC transporter complex OppABCDF involved in the uptake of oligopeptides, including the cell wall murein tripeptide L-alanyl-gamma-D-glutamyl-meso-diaminopimelate. Responsible for the translocation of the substrate across the membrane. Plays an important nutritional role and is involved in the recycling of cell wall peptides. The chain is Oligopeptide transport system permease protein OppB from Salmonella typhimurium (strain LT2 / SGSC1412 / ATCC 700720).